A 345-amino-acid chain; its full sequence is Protein RecA (345 aa).

65-72 contributes to the ATP binding site; it reads GPESSGKT. Residues 326–336 are compositionally biased toward basic and acidic residues; it reads EKFQPAEAARE. The segment at 326 to 345 is disordered; that stretch reads EKFQPAEAAREEGDDEGEDE.

It belongs to the RecA family.

The protein resides in the cytoplasm. Can catalyze the hydrolysis of ATP in the presence of single-stranded DNA, the ATP-dependent uptake of single-stranded DNA by duplex DNA, and the ATP-dependent hybridization of homologous single-stranded DNAs. It interacts with LexA causing its activation and leading to its autocatalytic cleavage. This is Protein RecA from Stenotrophomonas maltophilia (strain K279a).